The sequence spans 98 residues: NADH-ubiquinone oxidoreductase chain 4L (98 aa).

3 consecutive transmembrane segments (helical) span residues Met-1–Met-21, His-25–Thr-45, and Met-59–Val-81.

The protein belongs to the complex I subunit 4L family. Core subunit of respiratory chain NADH dehydrogenase (Complex I) which is composed of 45 different subunits.

Its subcellular location is the mitochondrion inner membrane. The catalysed reaction is a ubiquinone + NADH + 5 H(+)(in) = a ubiquinol + NAD(+) + 4 H(+)(out). In terms of biological role, core subunit of the mitochondrial membrane respiratory chain NADH dehydrogenase (Complex I) which catalyzes electron transfer from NADH through the respiratory chain, using ubiquinone as an electron acceptor. Part of the enzyme membrane arm which is embedded in the lipid bilayer and involved in proton translocation. The protein is NADH-ubiquinone oxidoreductase chain 4L (MT-ND4L) of Equus asinus (Donkey).